A 166-amino-acid polypeptide reads, in one-letter code: Interferon gamma (166 aa).

An N-terminal signal peptide occupies residues 1–23; that stretch reads MKYTSYILAFQLCVVLGSLGCYC. Position 24 is a pyrrolidone carboxylic acid (Q24). N48, N86, and N120 each carry an N-linked (GlcNAc...) asparagine glycan.

Belongs to the type II (or gamma) interferon family. In terms of assembly, homodimer. Interacts with IFNGR1 (via extracellular domain); this interaction promotes IFNGR1 dimerization. Released primarily from activated T lymphocytes.

It localises to the secreted. Type II interferon produced by immune cells such as T-cells and NK cells that plays crucial roles in antimicrobial, antiviral, and antitumor responses by activating effector immune cells and enhancing antigen presentation. Primarily signals through the JAK-STAT pathway after interaction with its receptor IFNGR1 to affect gene regulation. Upon IFNG binding, IFNGR1 intracellular domain opens out to allow association of downstream signaling components JAK2, JAK1 and STAT1, leading to STAT1 activation, nuclear translocation and transcription of IFNG-regulated genes. Many of the induced genes are transcription factors such as IRF1 that are able to further drive regulation of a next wave of transcription. Plays a role in class I antigen presentation pathway by inducing a replacement of catalytic proteasome subunits with immunoproteasome subunits. In turn, increases the quantity, quality, and repertoire of peptides for class I MHC loading. Increases the efficiency of peptide generation also by inducing the expression of activator PA28 that associates with the proteasome and alters its proteolytic cleavage preference. Up-regulates as well MHC II complexes on the cell surface by promoting expression of several key molecules such as cathepsins B/CTSB, H/CTSH, and L/CTSL. Participates in the regulation of hematopoietic stem cells during development and under homeostatic conditions by affecting their development, quiescence, and differentiation. The chain is Interferon gamma (IFNG) from Callithrix jacchus (White-tufted-ear marmoset).